The following is a 350-amino-acid chain: 3-isopropylmalate dehydrogenase (350 aa).

76–87 (GPKWDNAPKRPE) contacts NAD(+). Residues R94, R104, R132, and D217 each coordinate substrate. Mg(2+) contacts are provided by D217, D241, and D245. 275–287 (GSAPDIANQNIAN) is an NAD(+) binding site.

The protein belongs to the isocitrate and isopropylmalate dehydrogenases family. LeuB type 1 subfamily. Homodimer. Requires Mg(2+) as cofactor. Mn(2+) is required as a cofactor.

Its subcellular location is the cytoplasm. It catalyses the reaction (2R,3S)-3-isopropylmalate + NAD(+) = 4-methyl-2-oxopentanoate + CO2 + NADH. The protein operates within amino-acid biosynthesis; L-leucine biosynthesis; L-leucine from 3-methyl-2-oxobutanoate: step 3/4. Its function is as follows. Catalyzes the oxidation of 3-carboxy-2-hydroxy-4-methylpentanoate (3-isopropylmalate) to 3-carboxy-4-methyl-2-oxopentanoate. The product decarboxylates to 4-methyl-2 oxopentanoate. This chain is 3-isopropylmalate dehydrogenase, found in Listeria innocua serovar 6a (strain ATCC BAA-680 / CLIP 11262).